A 142-amino-acid chain; its full sequence is Hemoglobin subunit alpha (142 aa).

Residues 2 to 142 (VLSPADKSNV…VSTVLTSKYR (141 aa)) enclose the Globin domain. Ser4 carries the post-translational modification Phosphoserine. An N6-succinyllysine mark is found at Lys8 and Lys12. Lys17 carries the post-translational modification N6-acetyllysine; alternate. Position 17 is an N6-succinyllysine; alternate (Lys17). A Phosphotyrosine modification is found at Tyr25. Phosphoserine is present on Ser36. Lys41 is subject to N6-succinyllysine. At Ser50 the chain carries Phosphoserine. His59 is a binding site for O2. A heme b-binding site is contributed by His88. Residue Ser103 is modified to Phosphoserine. Thr109 is modified (phosphothreonine). Phosphoserine is present on residues Ser125 and Ser132. A phosphothreonine mark is found at Thr135 and Thr138. Residue Ser139 is modified to Phosphoserine.

It belongs to the globin family. In terms of assembly, heterotetramer of two alpha chains and two beta chains. As to expression, red blood cells.

In terms of biological role, involved in oxygen transport from the lung to the various peripheral tissues. Its function is as follows. Hemopressin acts as an antagonist peptide of the cannabinoid receptor CNR1. Hemopressin-binding efficiently blocks cannabinoid receptor CNR1 and subsequent signaling. The chain is Hemoglobin subunit alpha (HBA) from Ateles geoffroyi (Black-handed spider monkey).